The sequence spans 116 residues: Putative antiporter subunit mnhC2 (116 aa).

3 consecutive transmembrane segments (helical) span residues 3–23 (LILL…ILSV), 28–48 (IVIG…SMGN), and 72–92 (AIVL…LVLV).

This sequence belongs to the CPA3 antiporters (TC 2.A.63) subunit C family. May form a heterooligomeric complex that consists of seven subunits: mnhA2, mnhB2, mnhC2, mnhD2, mnhE2, mnhF2 and mnhG2.

Its subcellular location is the cell membrane. The sequence is that of Putative antiporter subunit mnhC2 (mnhC2) from Staphylococcus saprophyticus subsp. saprophyticus (strain ATCC 15305 / DSM 20229 / NCIMB 8711 / NCTC 7292 / S-41).